The sequence spans 99 residues: NADH-quinone oxidoreductase subunit K (99 aa).

A run of 3 helical transmembrane segments spans residues Pro-3 to Leu-23, Ile-28 to Phe-48, and Val-59 to Ile-79.

Belongs to the complex I subunit 4L family. NDH-1 is composed of 14 different subunits. Subunits NuoA, H, J, K, L, M, N constitute the membrane sector of the complex.

It localises to the cell membrane. The catalysed reaction is a quinone + NADH + 5 H(+)(in) = a quinol + NAD(+) + 4 H(+)(out). In terms of biological role, NDH-1 shuttles electrons from NADH, via FMN and iron-sulfur (Fe-S) centers, to quinones in the respiratory chain. The immediate electron acceptor for the enzyme in this species is believed to be a menaquinone. Couples the redox reaction to proton translocation (for every two electrons transferred, four hydrogen ions are translocated across the cytoplasmic membrane), and thus conserves the redox energy in a proton gradient. The protein is NADH-quinone oxidoreductase subunit K of Mycobacterium sp. (strain JLS).